Here is a 184-residue protein sequence, read N- to C-terminus: ATP synthase subunit b, chloroplastic (184 aa).

The helical transmembrane segment at 27 to 49 threads the bilayer; that stretch reads LATNPINLSVVLGVLIFFGKGVL.

This sequence belongs to the ATPase B chain family. As to quaternary structure, F-type ATPases have 2 components, F(1) - the catalytic core - and F(0) - the membrane proton channel. F(1) has five subunits: alpha(3), beta(3), gamma(1), delta(1), epsilon(1). F(0) has four main subunits: a(1), b(1), b'(1) and c(10-14). The alpha and beta chains form an alternating ring which encloses part of the gamma chain. F(1) is attached to F(0) by a central stalk formed by the gamma and epsilon chains, while a peripheral stalk is formed by the delta, b and b' chains.

The protein resides in the plastid. Its subcellular location is the chloroplast thylakoid membrane. Functionally, f(1)F(0) ATP synthase produces ATP from ADP in the presence of a proton or sodium gradient. F-type ATPases consist of two structural domains, F(1) containing the extramembraneous catalytic core and F(0) containing the membrane proton channel, linked together by a central stalk and a peripheral stalk. During catalysis, ATP synthesis in the catalytic domain of F(1) is coupled via a rotary mechanism of the central stalk subunits to proton translocation. In terms of biological role, component of the F(0) channel, it forms part of the peripheral stalk, linking F(1) to F(0). This chain is ATP synthase subunit b, chloroplastic, found in Platanus occidentalis (Sycamore).